A 78-amino-acid chain; its full sequence is UPF0335 protein RrIowa_0193 (78 aa).

It belongs to the UPF0335 family.

In Rickettsia rickettsii (strain Iowa), this protein is UPF0335 protein RrIowa_0193.